Reading from the N-terminus, the 306-residue chain is Protein-methionine-sulfoxide reductase catalytic subunit MsrP (306 aa).

The tat-type signal signal peptide spans 1-45 (MLIRHAPDLTDNDVTDHSLYLKRRTLMAGVAGLGVAGASASHAQA). Residues Asn69, 72-73 (YE), Cys127, Thr162, Asn210, Arg215, and 226-228 (GIK) each bind Mo-molybdopterin.

The protein belongs to the MsrP family. In terms of assembly, heterodimer of a catalytic subunit (MsrP) and a heme-binding subunit (MsrQ). Mo-molybdopterin is required as a cofactor. In terms of processing, predicted to be exported by the Tat system. The position of the signal peptide cleavage has not been experimentally proven.

The protein localises to the periplasm. It carries out the reaction L-methionyl-[protein] + a quinone + H2O = L-methionyl-(S)-S-oxide-[protein] + a quinol. The catalysed reaction is L-methionyl-[protein] + a quinone + H2O = L-methionyl-(R)-S-oxide-[protein] + a quinol. Its function is as follows. Part of the MsrPQ system that repairs oxidized periplasmic proteins containing methionine sulfoxide residues (Met-O), using respiratory chain electrons. Thus protects these proteins from oxidative-stress damage caused by reactive species of oxygen and chlorine generated by the host defense mechanisms. MsrPQ is essential for the maintenance of envelope integrity under bleach stress, rescuing a wide series of structurally unrelated periplasmic proteins from methionine oxidation. The catalytic subunit MsrP is non-stereospecific, being able to reduce both (R-) and (S-) diastereoisomers of methionine sulfoxide. This Caulobacter vibrioides (strain ATCC 19089 / CIP 103742 / CB 15) (Caulobacter crescentus) protein is Protein-methionine-sulfoxide reductase catalytic subunit MsrP.